Reading from the N-terminus, the 293-residue chain is Prohibitin-2 (293 aa).

The chain crosses the membrane as a helical; Signal-anchor for type II membrane protein span at residues 21 to 41 (FGGGFGLLALGGVGLLALSSL). The stretch at 190–235 (GREYAAAIEAKQVAQQEAERARFLVEKALQDKRSIIVKAEGEAQSA) forms a coiled coil.

Belongs to the prohibitin family. The mitochondrial prohibitin complex consists of two subunits (PHB1 and PHB2), assembled into a membrane-associated ring-shaped supercomplex of approximately 1 mDa.

The protein localises to the mitochondrion inner membrane. Its subcellular location is the cytoplasm. It is found in the nucleus. It localises to the cell membrane. Functionally, protein with pleiotropic attributes mediated in a cell-compartment- and tissue-specific manner, which include the plasma membrane-associated cell signaling functions, mitochondrial chaperone, and transcriptional co-regulator of transcription factors and sex steroid hormones in the nucleus. In terms of biological role, in the mitochondria, together with PHB, forms large ring complexes (prohibitin complexes) in the inner mitochondrial membrane (IMM) and functions as a chaperone protein that stabilizes mitochondrial respiratory enzymes and maintains mitochondrial integrity in the IMM, which is required for mitochondrial morphogenesis, neuronal survival, and normal lifespan. Its function is as follows. In the nucleus, serves as transcriptional co-regulator. This Dictyostelium discoideum (Social amoeba) protein is Prohibitin-2 (phbB).